A 55-amino-acid polypeptide reads, in one-letter code: ATP synthase protein 8 (55 aa).

The chain crosses the membrane as a helical span at residues 11-31; sequence LIMFSVTLMLLIVLVINHFML.

Belongs to the ATPase protein 8 family. As to quaternary structure, F-type ATPases have 2 components, CF(1) - the catalytic core - and CF(0) - the membrane proton channel.

The protein localises to the mitochondrion membrane. Its function is as follows. Mitochondrial membrane ATP synthase (F(1)F(0) ATP synthase or Complex V) produces ATP from ADP in the presence of a proton gradient across the membrane which is generated by electron transport complexes of the respiratory chain. F-type ATPases consist of two structural domains, F(1) - containing the extramembraneous catalytic core and F(0) - containing the membrane proton channel, linked together by a central stalk and a peripheral stalk. During catalysis, ATP synthesis in the catalytic domain of F(1) is coupled via a rotary mechanism of the central stalk subunits to proton translocation. Part of the complex F(0) domain. Minor subunit located with subunit a in the membrane. This Albinaria caerulea (Land snail) protein is ATP synthase protein 8 (MT-ATP8).